Here is a 607-residue protein sequence, read N- to C-terminus: Coronin-like protein cor-1 (607 aa).

3 WD repeats span residues 77–117, 127–167, and 170–209; these read AHKA…LNRN, GHQK…ALLE, and GHPD…VVHE. A disordered region spans residues 415 to 564; that stretch reads PTAAESVPTQ…VSAASDVGHV (150 aa). Positions 424–436 are enriched in low complexity; it reads QSYSERPPSSQQP. Over residues 437–447 the composition is skewed to pro residues; that stretch reads SPRPSASPRPR. Composition is skewed to basic and acidic residues over residues 473–489 and 517–533; these read SRTE…DPMK and AAAE…RTAD. Positions 544–559 are enriched in low complexity; sequence SSRASASPRGSVSAAS. A coiled-coil region spans residues 563–602; it reads HVPQNMDELLEDLMKMKAVLRQHERRIRMLEEEIADRNMS.

Belongs to the WD repeat coronin family.

The protein resides in the cytoplasm. Its subcellular location is the cytoskeleton. In terms of biological role, required to direct the migration of Q neuroblasts along the anterior axis of the body during larval development. This is dependent on its asymmetric expression in Q neuroblasts. This Caenorhabditis elegans protein is Coronin-like protein cor-1 (cor-1).